The primary structure comprises 176 residues: ATP-dependent protease subunit HslV (176 aa).

Thr4 is a catalytic residue. Positions 158, 161, and 164 each coordinate Na(+).

It belongs to the peptidase T1B family. HslV subfamily. A double ring-shaped homohexamer of HslV is capped on each side by a ring-shaped HslU homohexamer. The assembly of the HslU/HslV complex is dependent on binding of ATP.

It localises to the cytoplasm. The catalysed reaction is ATP-dependent cleavage of peptide bonds with broad specificity.. Allosterically activated by HslU binding. Functionally, protease subunit of a proteasome-like degradation complex believed to be a general protein degrading machinery. In Rhizobium meliloti (strain 1021) (Ensifer meliloti), this protein is ATP-dependent protease subunit HslV.